A 369-amino-acid chain; its full sequence is Phospho-N-acetylmuramoyl-pentapeptide-transferase (369 aa).

The next 10 membrane-spanning stretches (helical) occupy residues 30–50 (LAIF…IRWM), 74–94 (GTPT…TLLW), 97–117 (LSNP…LLGF), 136–156 (IRLA…IVFA), 177–197 (YFVD…VGAA), 208–228 (GLAT…AYLV), 244–264 (GVGE…GFLW), 272–292 (IFMG…VAVA), 297–317 (IVLA…IIQV), and 346–366 (TVVI…LATL).

Belongs to the glycosyltransferase 4 family. MraY subfamily. The cofactor is Mg(2+).

It is found in the cell inner membrane. The catalysed reaction is UDP-N-acetyl-alpha-D-muramoyl-L-alanyl-gamma-D-glutamyl-meso-2,6-diaminopimeloyl-D-alanyl-D-alanine + di-trans,octa-cis-undecaprenyl phosphate = di-trans,octa-cis-undecaprenyl diphospho-N-acetyl-alpha-D-muramoyl-L-alanyl-D-glutamyl-meso-2,6-diaminopimeloyl-D-alanyl-D-alanine + UMP. It functions in the pathway cell wall biogenesis; peptidoglycan biosynthesis. Its function is as follows. Catalyzes the initial step of the lipid cycle reactions in the biosynthesis of the cell wall peptidoglycan: transfers peptidoglycan precursor phospho-MurNAc-pentapeptide from UDP-MurNAc-pentapeptide onto the lipid carrier undecaprenyl phosphate, yielding undecaprenyl-pyrophosphoryl-MurNAc-pentapeptide, known as lipid I. The sequence is that of Phospho-N-acetylmuramoyl-pentapeptide-transferase from Phenylobacterium zucineum (strain HLK1).